A 126-amino-acid polypeptide reads, in one-letter code: Aspartate 1-decarboxylase (126 aa).

Serine 25 functions as the Schiff-base intermediate with substrate; via pyruvic acid in the catalytic mechanism. A Pyruvic acid (Ser) modification is found at serine 25. Residue threonine 57 participates in substrate binding. Tyrosine 58 acts as the Proton donor in catalysis. 73–75 (GAA) provides a ligand contact to substrate.

This sequence belongs to the PanD family. Heterooctamer of four alpha and four beta subunits. The cofactor is pyruvate. In terms of processing, is synthesized initially as an inactive proenzyme, which is activated by self-cleavage at a specific serine bond to produce a beta-subunit with a hydroxyl group at its C-terminus and an alpha-subunit with a pyruvoyl group at its N-terminus.

It is found in the cytoplasm. It catalyses the reaction L-aspartate + H(+) = beta-alanine + CO2. Its pathway is cofactor biosynthesis; (R)-pantothenate biosynthesis; beta-alanine from L-aspartate: step 1/1. Functionally, catalyzes the pyruvoyl-dependent decarboxylation of aspartate to produce beta-alanine. This chain is Aspartate 1-decarboxylase, found in Tolumonas auensis (strain DSM 9187 / NBRC 110442 / TA 4).